A 173-amino-acid chain; its full sequence is NADH-ubiquinone oxidoreductase chain 6 (173 aa).

6 helical membrane-spanning segments follow: residues Met-1 to Ser-21, Tyr-27 to Gly-47, Val-48 to Val-68, Val-87 to Phe-107, Phe-113 to Val-133, and Cys-139 to Leu-159.

It belongs to the complex I subunit 6 family.

The protein resides in the mitochondrion membrane. It carries out the reaction a ubiquinone + NADH + 5 H(+)(in) = a ubiquinol + NAD(+) + 4 H(+)(out). Functionally, core subunit of the mitochondrial membrane respiratory chain NADH dehydrogenase (Complex I) that is believed to belong to the minimal assembly required for catalysis. Complex I functions in the transfer of electrons from NADH to the respiratory chain. The immediate electron acceptor for the enzyme is believed to be ubiquinone. In Alle alle (Dovekie), this protein is NADH-ubiquinone oxidoreductase chain 6 (MT-ND6).